Consider the following 1048-residue polypeptide: PH and SEC7 domain-containing protein 3 (1048 aa).

The span at 36 to 45 (SEGKAPDTSD) shows a compositional bias: basic and acidic residues. Residues 36–57 (SEGKAPDTSDHGGSTLLPPNVT) form a disordered region. Ser-76 is subject to Phosphoserine. Disordered regions lie at residues 104 to 126 (LDSV…LKEQ), 310 to 342 (GGDK…KVPR), 364 to 383 (SWKA…SPVR), and 395 to 434 (QENK…PGYT). Residues 311-321 (GDKRETQHPID) show a composition bias toward basic and acidic residues. Residues 397–423 (NKQHLEKTPKPERDRERISEQEEHVKG) show a composition bias toward basic and acidic residues. Positions 534-734 (TKGTPEIAFW…KALYNSIKNE (201 aa)) constitute an SEC7 domain. The span at 741–758 (DDEEKKKSPSESTEEKAN) shows a compositional bias: basic and acidic residues. Residues 741–769 (DDEEKKKSPSESTEEKANGTHPKTISRIG) are disordered. Ser-770 carries the phosphoserine modification. The PH domain maps to 785 to 898 (AVYKSGFLAR…WINKINCVAA (114 aa)). Residues 922–952 (ATTTKLSQEEQLKSHESKLKQITTELAEHRS) adopt a coiled-coil conformation. The segment at 999 to 1048 (DESEAAGLKKSHSSPSLNPDTSPITAKVKRNVSERKDHRPETPSIKQKVT) is disordered. Phosphoserine occurs at positions 1009, 1011, 1012, 1014, and 1020. Residues 1011-1022 (SSPSLNPDTSPI) show a composition bias toward polar residues. The span at 1029–1039 (NVSERKDHRPE) shows a compositional bias: basic and acidic residues.

Isoform 2 is expressed in epididymis (at protein level).

Its subcellular location is the cell membrane. The protein localises to the cell projection. It localises to the ruffle membrane. The protein resides in the postsynaptic density. In terms of biological role, guanine nucleotide exchange factor for ARF6. This chain is PH and SEC7 domain-containing protein 3 (PSD3), found in Homo sapiens (Human).